The chain runs to 367 residues: Inositol-3-phosphate synthase (367 aa).

Serine 2 is subject to N-acetylserine. Residue lysine 73 forms an Isoglutamyl lysine isopeptide (Lys-Gln) (interchain with Q-Cter in protein Pup) linkage. Positions 78, 137, 157, 200, 235, and 248 each coordinate NAD(+).

It belongs to the myo-inositol 1-phosphate synthase family. It depends on NAD(+) as a cofactor. In terms of processing, pupylated at Lys-73 by the prokaryotic ubiquitin-like protein Pup, which leads to its degradation by the proteasome.

It carries out the reaction D-glucose 6-phosphate = 1D-myo-inositol 3-phosphate. Functionally, key enzyme in myo-inositol biosynthesis pathway that catalyzes the conversion of glucose 6-phosphate to 1D-myo-inositol 3-phosphate in a NAD-dependent manner. The polypeptide is Inositol-3-phosphate synthase (ino1) (Mycobacterium tuberculosis (strain ATCC 25618 / H37Rv)).